The following is a 472-amino-acid chain: UDP-glycosyltransferase 708G2 (472 aa).

Catalysis depends on His-23, which acts as the Proton acceptor. Residue His-23 participates in an anthocyanidin binding. Catalysis depends on Asp-117, which acts as the Charge relay. Thr-140 serves as a coordination point for UDP-alpha-D-glucose. Residues 283 to 284 are UDP; it reads SR. UDP-alpha-D-glucose-binding residues include Val-346, Gln-348, His-363, Trp-366, Asn-367, Ser-368, and Glu-371. Gly-386 lines the an anthocyanidin pocket. Residues Asp-387 and Gln-388 each coordinate UDP-alpha-D-glucose.

It belongs to the UDP-glycosyltransferase family. Expressed at low levels in leaves, flowers and immature leaves.

The catalysed reaction is a 3'-hydro-2'-hydroxy-beta-oxodihydrochalcone + UDP-alpha-D-glucose = a 3'-(beta-D-glucopyranosyl)-2'-hydroxy-beta-oxodihydrochalcone + UDP + H(+). Functionally, UDP-glucose-dependent glucosyltransferase catalyzing the C-glucosylation of 2-hydroxyflavanones (2-hydroxylnaringenin and 2-hydroxypinocembrin) and phloretin. No activity with flavanones, flavones or flavonols. Exhibits C-glucosylation activity toward 2-phenyl-2',4',6'-trihydroxyacetophenone. Can use UDP-xylose as sugar donor, but catalytic efficiency is much lower toward UDP-xylose than toward UDP-glucose. The chain is UDP-glycosyltransferase 708G2 (UGT708G2) from Citrus unshiu (Satsuma mandarin).